A 345-amino-acid polypeptide reads, in one-letter code: Proto-oncogene serine/threonine-protein kinase mos (345 aa).

Positions 63–344 constitute a Protein kinase domain; sequence VCLLQRLGAG…LDLRALQAEL (282 aa). ATP contacts are provided by residues 69-77 and Lys90; that span reads LGAGGFGSV. The active-site Proton acceptor is Asp202.

The protein belongs to the protein kinase superfamily. Ser/Thr protein kinase family. Interacts with MAP2K1/MEK1. As to expression, restricted to gonadal tissues.

It localises to the cytoplasm. It carries out the reaction L-seryl-[protein] + ATP = O-phospho-L-seryl-[protein] + ADP + H(+). The enzyme catalyses L-threonyl-[protein] + ATP = O-phospho-L-threonyl-[protein] + ADP + H(+). Serine/threonine kinase involved in the regulation of MAPK signaling. Is an activator of the ERK1/2 signaling cascade playing an essential role in the stimulation of oocyte maturation. This chain is Proto-oncogene serine/threonine-protein kinase mos, found in Sus scrofa (Pig).